Reading from the N-terminus, the 158-residue chain is NADPH-dependent 7-cyano-7-deazaguanine reductase (158 aa).

Cys-56 (thioimide intermediate) is an active-site residue. Asp-63 (proton donor) is an active-site residue. Residues 78-80 and 97-98 contribute to the substrate site; these read LES and HE.

It belongs to the GTP cyclohydrolase I family. QueF type 1 subfamily.

It is found in the cytoplasm. The enzyme catalyses 7-aminomethyl-7-carbaguanine + 2 NADP(+) = 7-cyano-7-deazaguanine + 2 NADPH + 3 H(+). The protein operates within tRNA modification; tRNA-queuosine biosynthesis. In terms of biological role, catalyzes the NADPH-dependent reduction of 7-cyano-7-deazaguanine (preQ0) to 7-aminomethyl-7-deazaguanine (preQ1). This chain is NADPH-dependent 7-cyano-7-deazaguanine reductase, found in Rhodopseudomonas palustris (strain TIE-1).